The sequence spans 257 residues: Leucine-rich repeat-containing protein 3 (257 aa).

Positions 1–32 are cleaved as a signal peptide; sequence MGTVRPPRPSLLLVSTRESCLFLLFCLHLGAA. Residues 33–64 enclose the LRRNT domain; the sequence is CPQPCRCPDHAGAVAVFCSLRGLQEVPEDIPA. LRR repeat units lie at residues 65 to 86, 89 to 110, 114 to 135, and 136 to 157; these read NTVL…AFQH, RLRE…TFAG, GLRL…ALGK, and LSAK…QEAL. Residues 205–225 traverse the membrane as a helical segment; it reads VAMLVTMFGWFAMVIAYVVYY.

It belongs to the LRRC3 family. As to expression, widely expressed; detected in testis, lung, small intestine, breast, brain, heart, bone marrow, placenta, colon, fetal brain, liver, fetal liver, thymus, salivary gland, spinal cord, spleen, trachea and adrenal gland.

The protein resides in the membrane. The chain is Leucine-rich repeat-containing protein 3 (LRRC3) from Homo sapiens (Human).